The primary structure comprises 349 residues: sn-glycerol-3-phosphate import ATP-binding protein UgpC (349 aa).

An ABC transporter domain is found at 4 to 235 (ITLKDVHKTY…PATAFVATFI (232 aa)). Position 37 to 44 (37 to 44 (GPSGCGKS)) interacts with ATP.

This sequence belongs to the ABC transporter superfamily. sn-glycerol-3-phosphate importer (TC 3.A.1.1.3) family. The complex is composed of two ATP-binding proteins (UgpC), two transmembrane proteins (UgpA and UgpE) and a solute-binding protein (UgpB).

It localises to the cell inner membrane. It catalyses the reaction sn-glycerol 3-phosphate(out) + ATP + H2O = sn-glycerol 3-phosphate(in) + ADP + phosphate + H(+). In terms of biological role, part of the ABC transporter complex UgpBAEC involved in sn-glycerol-3-phosphate (G3P) import. Responsible for energy coupling to the transport system. This Rhizobium meliloti (strain 1021) (Ensifer meliloti) protein is sn-glycerol-3-phosphate import ATP-binding protein UgpC.